A 155-amino-acid polypeptide reads, in one-letter code: Small ribosomal subunit protein uS7cz/uS7cy (155 aa).

This sequence belongs to the universal ribosomal protein uS7 family. Part of the 30S ribosomal subunit.

It localises to the plastid. The protein localises to the chloroplast. Its function is as follows. One of the primary rRNA binding proteins, it binds directly to 16S rRNA where it nucleates assembly of the head domain of the 30S subunit. This is Small ribosomal subunit protein uS7cz/uS7cy (rps7-A) from Lotus japonicus (Lotus corniculatus var. japonicus).